The chain runs to 248 residues: Segregation and condensation protein A (248 aa).

This sequence belongs to the ScpA family. In terms of assembly, component of a cohesin-like complex composed of ScpA, ScpB and the Smc homodimer, in which ScpA and ScpB bind to the head domain of Smc. The presence of the three proteins is required for the association of the complex with DNA.

It localises to the cytoplasm. Its function is as follows. Participates in chromosomal partition during cell division. May act via the formation of a condensin-like complex containing Smc and ScpB that pull DNA away from mid-cell into both cell halves. The chain is Segregation and condensation protein A from Clostridium perfringens (strain SM101 / Type A).